We begin with the raw amino-acid sequence, 1431 residues long: 1-phosphatidylinositol 4,5-bisphosphate phosphodiesterase beta egl-8 (1431 aa).

In terms of domain architecture, PI-PLC X-box spans 340–491 (MDMDQPLCHY…LRKKILIKNK (152 aa)). H355 is an active-site residue. Residues N356, E385, and D387 each contribute to the Ca(2+) site. H403 is an active-site residue. Ca(2+) is bound at residue E437. Substrate-binding residues include K489 and K491. 2 disordered regions span residues 510 to 601 (KLDE…MVPD) and 632 to 692 (RRQS…SGPS). Over residues 543–556 (EEVDDDTSDDDDDP) the composition is skewed to acidic residues. Composition is skewed to low complexity over residues 572 to 586 (NTTSNNGSNRSARSS), 652 to 661 (SSSSPATPSI), and 668 to 692 (ATSSGSTSSITITTTGCSTSSSGPS). Residues 758–874 (LSSLVNYTHP…GYLLKPDFLR (117 aa)) form the PI-PLC Y-box domain. Substrate is bound by residues S787 and R814. The C2 domain maps to 877 to 1002 (DRTFDPFSES…SLRSDTNQSF (126 aa)). Disordered stretches follow at residues 1072-1119 (QPPR…VAVD), 1150-1176 (DLRKKHQKQRDSIQKQQPARRRNSSIA), and 1188-1216 (NNRRSTKKEKGSRRSLTASVSSGCGSASG). Residues 1074–1113 (PRQNGSSADLLANNGQTGSARGDQTSSMASSTIRSPNEQP) are compositionally biased toward polar residues. Positions 1135–1166 (KAFAKLLKRFQKELDDLRKKHQKQRDSIQKQQ) form a coiled coil. Positions 1150 to 1162 (DLRKKHQKQRDSI) are enriched in basic and acidic residues. A compositionally biased stretch (basic residues) spans 1191–1200 (RSTKKEKGSR). The span at 1204–1216 (TASVSSGCGSASG) shows a compositional bias: low complexity. Coiled-coil stretches lie at residues 1288-1318 (DEEEFELKKVQLKEQFDLLRKLMSEAQKNQM) and 1368-1402 (EKNLKMFVEERKRLAMKAQKHEEQLTKRHLDQLEQ).

Ca(2+) serves as cofactor. Expressed in most or all neurons with high expression in the head and tail ganglia and low expression in the motor neurons of the ventral cord. Expressed in the intestine (at protein level). In males, expressed in vas deferens, spicule protractor muscles, diagonal muscles and a male-specific neuron.

Its subcellular location is the perikaryon. The protein resides in the cell projection. It localises to the axon. The protein localises to the synapse. It is found in the cell junction. Its subcellular location is the adherens junction. The catalysed reaction is a 1,2-diacyl-sn-glycero-3-phospho-(1D-myo-inositol-4,5-bisphosphate) + H2O = 1D-myo-inositol 1,4,5-trisphosphate + a 1,2-diacyl-sn-glycerol + H(+). Functionally, mediates the production of the second messenger molecules diacylglycerol (DAG) and inositol 1,4,5-trisphosphate (IP3) which plays an important role in the regulation of intracellular signaling cascades. Required in the nervous system to modulate neuronal activity. Facilitates synaptic transmission at neuromuscular junctions by regulating the release of acetylcholine from the motor neurons and thus affecting locomotion. Plays a role in efficient egg laying and defecation. Involved in axon regeneration after injury. Plays a role in male mating behavior by regulating spicule insertion and sperm transfer. By triggering Ca(2+) transient via IP3-mediated activation of IPR3 receptor itr-1 in ASH sensory neurons, regulates avoidance behavior in response to nose touch. By activating tpa-1 via DAG production, required for the expression of antimicrobial peptide nlp-29 in response to fungal infection. During embryogenesis, may play a role in epidermal morphogenesis together with plc-1. The chain is 1-phosphatidylinositol 4,5-bisphosphate phosphodiesterase beta egl-8 from Caenorhabditis elegans.